The following is a 394-amino-acid chain: Glycerol-3-phosphate dehydrogenase [NAD(+)] 2 (394 aa).

NAD(+)-binding positions include 41–46 (GSGNWG), lysine 152, and alanine 185. Lysine 152 lines the substrate pocket. The Proton acceptor role is filled by lysine 243. 2 residues coordinate NAD(+): arginine 308 and glutamine 337. Residue 308–309 (RN) coordinates substrate.

The protein belongs to the NAD-dependent glycerol-3-phosphate dehydrogenase family.

The enzyme catalyses sn-glycerol 3-phosphate + NAD(+) = dihydroxyacetone phosphate + NADH + H(+). This chain is Glycerol-3-phosphate dehydrogenase [NAD(+)] 2 (gpd2), found in Cyberlindnera jadinii (Torula yeast).